The primary structure comprises 205 residues: Octanoyltransferase (205 aa).

The BPL/LPL catalytic domain maps to 30–205 (NSSDELVWLL…ILKKEFYKIF (176 aa)). Residues 68-75 (RGGKYTYH), 140-142 (AFG), and 153-155 (GIA) each bind substrate. The active-site Acyl-thioester intermediate is the cysteine 171.

It belongs to the LipB family.

Its subcellular location is the cytoplasm. It catalyses the reaction octanoyl-[ACP] + L-lysyl-[protein] = N(6)-octanoyl-L-lysyl-[protein] + holo-[ACP] + H(+). Its pathway is protein modification; protein lipoylation via endogenous pathway; protein N(6)-(lipoyl)lysine from octanoyl-[acyl-carrier-protein]: step 1/2. Catalyzes the transfer of endogenously produced octanoic acid from octanoyl-acyl-carrier-protein onto the lipoyl domains of lipoate-dependent enzymes. Lipoyl-ACP can also act as a substrate although octanoyl-ACP is likely to be the physiological substrate. This chain is Octanoyltransferase, found in Wolbachia sp. subsp. Brugia malayi (strain TRS).